We begin with the raw amino-acid sequence, 87 residues long: UPF0213 protein SYNAS_10430 (87 aa).

Residues 2 to 78 form the GIY-YIG domain; it reads SKNYVYILEC…KKMSRAEKLQ (77 aa).

It belongs to the UPF0213 family.

This chain is UPF0213 protein SYNAS_10430, found in Syntrophus aciditrophicus (strain SB).